Consider the following 214-residue polypeptide: Rac-like GTP-binding protein 2 (214 aa).

14 to 21 (GDGAVGKT) serves as a coordination point for GTP. The Effector region motif lies at 36 to 44 (YIPTVFDNF). Residues 61-65 (DTAGQ) and 119-122 (TKLD) each bind GTP.

It belongs to the small GTPase superfamily. Rho family. May be palmitoylated.

It is found in the cytoplasm. The protein localises to the membrane. Inactive GDP-bound Rho GTPases reside in the cytosol, are found in a complex with Rho GDP-dissociation inhibitors (Rho GDIs), and are released from the GDI protein in order to translocate to membranes upon activation. The sequence is that of Rac-like GTP-binding protein 2 (RAC2) from Oryza sativa subsp. japonica (Rice).